The primary structure comprises 202 residues: Peptide methionine sulfoxide reductase B2, chloroplastic (202 aa).

Residues 1 to 63 (MAFNIITPGR…RRGFHGGRIV (63 aa)) constitute a chloroplast transit peptide. The region spanning 77–198 (EEEWRAILSP…NSISLKFTPE (122 aa)) is the MsrB domain. Zn(2+) contacts are provided by Cys116, Cys119, Cys162, and Cys165. Cys134 and Cys187 form a disulfide bridge. Cys187 functions as the Nucleophile in the catalytic mechanism.

It belongs to the MsrB Met sulfoxide reductase family. Requires Zn(2+) as cofactor. Expressed in stems, young leaves, floral buds and flowers. Expressed at low levels in roots, mature leaves and siliques (at protein level).

It is found in the plastid. It localises to the chloroplast. The enzyme catalyses L-methionyl-[protein] + [thioredoxin]-disulfide + H2O = L-methionyl-(R)-S-oxide-[protein] + [thioredoxin]-dithiol. Catalyzes the reduction of methionine sulfoxide (MetSO) to methionine in proteins. Specifically reduces the MetSO R-enantiomer. Plays a protective role against oxidative stress by restoring activity to proteins that have been inactivated by methionine oxidation. May play an essential function in association with MSRB1 in maintaining vegetative growth during environmental constraints, through the preservation of photosynthetic antennae. MSRB1 and MSRB2 account for most of the leaf peptide MSR capacity. The chain is Peptide methionine sulfoxide reductase B2, chloroplastic from Arabidopsis thaliana (Mouse-ear cress).